The sequence spans 363 residues: G-protein coupled receptor 78 (363 aa).

The Extracellular portion of the chain corresponds to 1 to 7 (MGPGEAL). Residues 8–28 (LAGLLVMVLAVALLSNALVLL) form a helical membrane-spanning segment. The Cytoplasmic segment spans residues 29–47 (CCAYSAELRTRASGVLLVN). Residues 48–68 (LSLGHLLLAALDMPFTLLGVM) form a helical membrane-spanning segment. At 69–80 (RGRTPSAPGACQ) the chain is on the extracellular side. Cys-79 and Cys-156 are disulfide-bonded. A helical membrane pass occupies residues 81–101 (VIGFLDTFLASNAALSVAALS). The Cytoplasmic portion of the chain corresponds to 102-122 (ADQWLAVGFPLRYAGRLRPRY). Residues 123-143 (AGLLLGCAWGQSLAFSGAALG) traverse the membrane as a helical segment. The Extracellular segment spans residues 144-168 (CSWLGYSSAFASCSLRLPPEPERPR). Residues 169-189 (FAAFTATLHAVGFVLPLAVLC) form a helical membrane-spanning segment. Residues 190 to 242 (LTSLQVHRVARRHCQRMDTVTMKALALLADLHPSVRQRCLIQQKRRRHRATRK) lie on the Cytoplasmic side of the membrane. The helical transmembrane segment at 243–263 (IGIAIATFLICFAPYVMTRLA) threads the bilayer. The Extracellular segment spans residues 264-277 (ELVPFVTVNAQWGI). A helical membrane pass occupies residues 278–297 (LSKCLTYSKAVADPFTYSLL). Over 298–363 (RRPFRQVLAG…ENDSCLQQTH (66 aa)) the chain is Cytoplasmic. The interval 340 to 363 (TPRPASTHNGSVDTENDSCLQQTH) is disordered. Residues 343-363 (PASTHNGSVDTENDSCLQQTH) show a composition bias toward polar residues.

The protein belongs to the G-protein coupled receptor 1 family. High level of expression in placenta. Expressed throughout the brain at low level. No expression detected in skeletal muscle, lung, heart, liver, pancreas, or kidney.

The protein resides in the cell membrane. Its function is as follows. Orphan receptor. Displays a significant level of constitutive activity. Its effect is mediated by G(s)-alpha protein that stimulate adenylate cyclase, resulting in an elevation of intracellular cAMP. The chain is G-protein coupled receptor 78 (GPR78) from Homo sapiens (Human).